The following is a 216-amino-acid chain: MOB kinase activator 3C (216 aa).

Zn(2+) is bound by residues Cys82, Cys87, His164, and His169.

This sequence belongs to the MOB1/phocein family.

Its function is as follows. May regulate the activity of kinases. This Mus musculus (Mouse) protein is MOB kinase activator 3C (Mob3c).